The primary structure comprises 271 residues: Acyl-[acyl-carrier-protein]--UDP-N-acetylglucosamine O-acyltransferase (271 aa).

The protein belongs to the transferase hexapeptide repeat family. LpxA subfamily. In terms of assembly, homotrimer.

Its subcellular location is the cytoplasm. The enzyme catalyses a (3R)-hydroxyacyl-[ACP] + UDP-N-acetyl-alpha-D-glucosamine = a UDP-3-O-[(3R)-3-hydroxyacyl]-N-acetyl-alpha-D-glucosamine + holo-[ACP]. It functions in the pathway glycolipid biosynthesis; lipid IV(A) biosynthesis; lipid IV(A) from (3R)-3-hydroxytetradecanoyl-[acyl-carrier-protein] and UDP-N-acetyl-alpha-D-glucosamine: step 1/6. Functionally, involved in the biosynthesis of lipid A, a phosphorylated glycolipid that anchors the lipopolysaccharide to the outer membrane of the cell. This chain is Acyl-[acyl-carrier-protein]--UDP-N-acetylglucosamine O-acyltransferase, found in Ralstonia nicotianae (strain ATCC BAA-1114 / GMI1000) (Ralstonia solanacearum).